A 737-amino-acid chain; its full sequence is Lysyl oxidase homolog 2A (737 aa).

A signal peptide spans 1 to 18 (MAVSSALCIFSLLVLAQA). SRCR domains follow at residues 29–130 (LRLA…VICN), 159–270 (IRPI…VSCV), 294–393 (VRLR…VRCN), and 403–512 (IRLS…VSCS). Cystine bridges form between cysteine 55–cysteine 119, cysteine 68–cysteine 129, cysteine 99–cysteine 109, cysteine 188–cysteine 259, cysteine 201–cysteine 269, cysteine 235–cysteine 245, cysteine 319–cysteine 382, cysteine 332–cysteine 392, and cysteine 363–cysteine 373. A glycan (N-linked (GlcNAc...) asparagine) is linked at asparagine 256. Asparagine 423 is a glycosylation site (N-linked (GlcNAc...) asparagine). Cystine bridges form between cysteine 432/cysteine 498, cysteine 445/cysteine 511, and cysteine 479/cysteine 489. The lysyl-oxidase like stretch occupies residues 516–718 (PDLVLNAQLV…WTYSCHIGGS (203 aa)). Positions 517 and 518 each coordinate Ca(2+). Intrachain disulfides connect cysteine 541-cysteine 592, cysteine 547-cysteine 662, cysteine 624-cysteine 640, and cysteine 630-cysteine 652. Cu cation-binding residues include histidine 593, histidine 595, and histidine 597. N-linked (GlcNAc...) asparagine glycosylation occurs at asparagine 611. Positions 620–656 (KASFCLEDTHCDEGISKRYHCANFGEQGITVGCWDTY) form a cross-link, lysine tyrosylquinone (Lys-Tyr). Tyrosine 656 is subject to 2',4',5'-topaquinone. The Ca(2+) site is built by glutamate 689, aspartate 691, asparagine 694, and asparagine 695. Residues cysteine 699 and cysteine 713 are joined by a disulfide bond.

The protein belongs to the lysyl oxidase family. Cu cation serves as cofactor. It depends on lysine tyrosylquinone residue as a cofactor. Post-translationally, the lysine tyrosylquinone cross-link (LTQ) is generated by condensation of the epsilon-amino group of a lysine with a topaquinone produced by oxidation of tyrosine.

It localises to the secreted. The protein localises to the extracellular space. Its subcellular location is the extracellular matrix. It is found in the basement membrane. The protein resides in the nucleus. It localises to the chromosome. The protein localises to the endoplasmic reticulum. It catalyses the reaction L-lysyl-[protein] + O2 + H2O = (S)-2-amino-6-oxohexanoyl-[protein] + H2O2 + NH4(+). Functionally, mediates the post-translational oxidative deamination of lysine residues on target proteins leading to the formation of deaminated lysine (allysine). Acts as a transcription corepressor and specifically mediates deamination of trimethylated 'Lys-4' of histone H3 (H3K4me3), a specific tag for epigenetic transcriptional activation. Shows no activity against histone H3 when it is trimethylated on 'Lys-9' (H3K9me3) or 'Lys-27' (H3K27me3) or when 'Lys-4' is monomethylated (H3K4me1) or dimethylated (H3K4me2). Also mediates deamination of methylated TAF10, a member of the transcription factor IID (TFIID) complex, which induces release of TAF10 from promoters, leading to inhibition of TFIID-dependent transcription. LOXL2-mediated deamination of TAF10 results in transcriptional repression of genes required for embryonic stem cell pluripotency. Involved in epithelial to mesenchymal transition (EMT) and participates in repression of E-cadherin, probably by mediating deamination of histone H3. When secreted into the extracellular matrix, promotes cross-linking of extracellular matrix proteins by mediating oxidative deamination of peptidyl lysine residues in precursors to fibrous collagen and elastin. Acts as a regulator of sprouting angiogenesis, probably via collagen IV scaffolding. Acts as a regulator of chondrocyte differentiation, probably by regulating expression of factors that control chondrocyte differentiation. Required with loxl2b for correct expression of Sox2 and for neural differentiation. In Danio rerio (Zebrafish), this protein is Lysyl oxidase homolog 2A (loxl2a).